Consider the following 236-residue polypeptide: Ubiquinone biosynthesis O-methyltransferase (236 aa).

S-adenosyl-L-methionine-binding residues include Arg-39, Gly-59, Asp-80, and Met-124.

This sequence belongs to the methyltransferase superfamily. UbiG/COQ3 family.

It catalyses the reaction a 3-demethylubiquinol + S-adenosyl-L-methionine = a ubiquinol + S-adenosyl-L-homocysteine + H(+). The enzyme catalyses a 3-(all-trans-polyprenyl)benzene-1,2-diol + S-adenosyl-L-methionine = a 2-methoxy-6-(all-trans-polyprenyl)phenol + S-adenosyl-L-homocysteine + H(+). The protein operates within cofactor biosynthesis; ubiquinone biosynthesis. In terms of biological role, O-methyltransferase that catalyzes the 2 O-methylation steps in the ubiquinone biosynthetic pathway. This chain is Ubiquinone biosynthesis O-methyltransferase, found in Shewanella putrefaciens (strain CN-32 / ATCC BAA-453).